Reading from the N-terminus, the 484-residue chain is Zinc metalloproteinase homolog-disintegrin albolatin (484 aa).

The first 20 residues, 1–20, serve as a signal peptide directing secretion; it reads MIQVLLVTICLAVFPYQGSS. Positions 21–191 are excised as a propeptide; sequence IILESGNVND…KTSQLNLPLL (171 aa). Residues asparagine 80, asparagine 251, and asparagine 301 are each glycosylated (N-linked (GlcNAc...) asparagine). The region spanning 194–392 is the Peptidase M12B domain; sequence RCIELVMVAD…WTSYCLYNEP (199 aa). 10 cysteine pairs are disulfide-bonded: cysteine 305/cysteine 387, cysteine 345/cysteine 369, cysteine 347/cysteine 352, cysteine 403/cysteine 422, cysteine 414/cysteine 432, cysteine 416/cysteine 427, cysteine 426/cysteine 449, cysteine 440/cysteine 446, cysteine 445/cysteine 470, and cysteine 458/cysteine 477. Positions 400–484 constitute a Disintegrin domain; that stretch reads PPVCGNYYLE…GDCPWIGYYG (85 aa). A Cell attachment site; atypical (KGD) motif is present at residues 462–464; sequence KGD.

It belongs to the venom metalloproteinase (M12B) family. P-II subfamily. P-IIb sub-subfamily. As to quaternary structure, homodimer; disulfide-linked (disintegrin). In terms of tissue distribution, expressed by the venom gland.

Its subcellular location is the secreted. In terms of biological role, the function of this complete protein has not been studied, but it may be similar to the function of the disintegrin domain. A recombinant protein of this domain (409-484) inhibits collagen-induced human platelet aggregation, without having effect on ADP-induced aggregation. It may act either by blocking the binding of fibrinogen to the platelet receptor GPIIb/GPIIIa (ITGA2B/ITGB3) or by blocking the binding of collagen to the integrin alpha-2/beta-1 complex (ITGA2/ITGB1). The protein is Zinc metalloproteinase homolog-disintegrin albolatin of Trimeresurus albolabris (White-lipped pit viper).